We begin with the raw amino-acid sequence, 223 residues long: Lipoprotein signal peptidase (223 aa).

A disordered region spans residues 1-20 (MNSAKVNPSGHAPTPAPTAS). 4 helical membrane-spanning segments follow: residues 32 to 52 (LFFG…EAIF), 65 to 85 (WIIE…VFGL), 91 to 111 (LVFA…LFFF), and 116 to 136 (SCWL…NLYD). Catalysis depends on residues D156 and D175. The helical transmembrane segment at 173-193 (IADSLLVTGAIMLLVQSFFFP) threads the bilayer. The segment at 196–223 (PHGEADGNELPGRRAPDEPTEGTKPAAS) is disordered.

It belongs to the peptidase A8 family.

Its subcellular location is the cell inner membrane. The catalysed reaction is Release of signal peptides from bacterial membrane prolipoproteins. Hydrolyzes -Xaa-Yaa-Zaa-|-(S,diacylglyceryl)Cys-, in which Xaa is hydrophobic (preferably Leu), and Yaa (Ala or Ser) and Zaa (Gly or Ala) have small, neutral side chains.. The protein operates within protein modification; lipoprotein biosynthesis (signal peptide cleavage). Functionally, this protein specifically catalyzes the removal of signal peptides from prolipoproteins. The polypeptide is Lipoprotein signal peptidase (Rhodopirellula baltica (strain DSM 10527 / NCIMB 13988 / SH1)).